The chain runs to 589 residues: ATP-dependent ubiquitin transferase-like protein Cap2 (589 aa).

Residue cysteine 13 forms a Glycyl cysteine dithioester (Cys-Gly) (interchain with G-Cter in DncV) linkage. Residue lysine 77 forms a Glycyl lysine isopeptide (Lys-Gly) (interchain with G-Cter in DncV) linkage. The For E2-like domain role is filled by cysteine 91. Glycyl lysine isopeptide (Lys-Gly) (interchain with G-Cter in DncV) cross-links involve residues lysine 305, lysine 387, and lysine 484. Cysteine 493 is covalently cross-linked (Glycyl cysteine dithioester (Cys-Gly) (interchain with G-Cter in DncV)). Catalysis depends on for E1-like domain residues cysteine 493, cysteine 496, and cysteine 513. A Glycyl cysteine dithioester (Cys-Gly) (interchain with G-Cter in DncV) cross-link involves residue cysteine 513. Lysine 523 is covalently cross-linked (Glycyl lysine isopeptide (Lys-Gly) (interchain with G-Cter in DncV)).

The protein in the C-terminal section; belongs to the HesA/MoeB/ThiF family. As to quaternary structure, a Cap2 dimer is bound on either side by a DncV monomer. Post-translationally, conjugated to DncV via 5 different Lys residues and 3 Cys residues.

Its function is as follows. CD-NTase priming component of a CBASS antiviral system. CBASS (cyclic oligonucleotide-based antiphage signaling system) provides immunity against bacteriophages. The CD-NTase protein (DncV) synthesizes cyclic nucleotides in response to infection; these serve as specific second messenger signals. The signals activate a diverse range of effectors, leading to bacterial cell death and thus abortive phage infection. A type II-A(GA) CBASS system. In terms of biological role, conjugates DncV to itself in vitro and to other cellular proteins in vivo; conjugation requires ATP. This primes DncV, upon phage infection CdnA activates and makes cyclic nucleotides. Protects E.coli against phage infection. When capV and dncV are introduced in E.coli MG1655 there is 1000-fold protection against phage P1; protection against other phage (T2, T4, T5, T6 and lambda-vir) requires the 2 subsequent genes. In another paper the capV-dncV-cap2-cap3 operon gives 10(4)-10(5)-fold protection against phages lambda, T2, T4 and T6, about 1000-fold protection against P1 and 10-fold protection against T5. The sequence is that of ATP-dependent ubiquitin transferase-like protein Cap2 from Escherichia coli (strain TW11681).